Here is a 295-residue protein sequence, read N- to C-terminus: Pantothenate synthetase (295 aa).

29 to 36 provides a ligand contact to ATP; it reads MGALHSGH. The active-site Proton donor is the histidine 36. Glutamine 60 serves as a coordination point for (R)-pantoate. Residue glutamine 60 coordinates beta-alanine. An ATP-binding site is contributed by 158–161; that stretch reads GQKD. Glutamine 164 contacts (R)-pantoate. Residues valine 187 and 195-198 contribute to the ATP site; that span reads LSSR.

The protein belongs to the pantothenate synthetase family. As to quaternary structure, homodimer.

It localises to the cytoplasm. The catalysed reaction is (R)-pantoate + beta-alanine + ATP = (R)-pantothenate + AMP + diphosphate + H(+). It functions in the pathway cofactor biosynthesis; (R)-pantothenate biosynthesis; (R)-pantothenate from (R)-pantoate and beta-alanine: step 1/1. In terms of biological role, catalyzes the condensation of pantoate with beta-alanine in an ATP-dependent reaction via a pantoyl-adenylate intermediate. This Paenarthrobacter aurescens (strain TC1) protein is Pantothenate synthetase.